Here is a 266-residue protein sequence, read N- to C-terminus: Glutamate racemase (266 aa).

Residues 9–10 (DS) and 41–42 (YG) each bind substrate. The Proton donor/acceptor role is filled by Cys72. 73 to 74 (NT) is a substrate binding site. Cys184 functions as the Proton donor/acceptor in the catalytic mechanism. Residue 185-186 (TH) coordinates substrate.

The protein belongs to the aspartate/glutamate racemases family.

The catalysed reaction is L-glutamate = D-glutamate. It participates in cell wall biogenesis; peptidoglycan biosynthesis. In terms of biological role, provides the (R)-glutamate required for cell wall biosynthesis. In Staphylococcus haemolyticus (strain JCSC1435), this protein is Glutamate racemase.